The chain runs to 243 residues: Type III pantothenate kinase (243 aa).

6-13 (DIGNTVAK) contributes to the ATP binding site. Substrate contacts are provided by residues Tyr86 and 93-96 (GYDR). The active-site Proton acceptor is the Asp95. Residue Asp116 participates in K(+) binding. Thr119 contacts ATP. Residue Thr171 coordinates substrate.

The protein belongs to the type III pantothenate kinase family. As to quaternary structure, homodimer. The cofactor is NH4(+). K(+) is required as a cofactor.

The protein resides in the cytoplasm. The enzyme catalyses (R)-pantothenate + ATP = (R)-4'-phosphopantothenate + ADP + H(+). Its pathway is cofactor biosynthesis; coenzyme A biosynthesis; CoA from (R)-pantothenate: step 1/5. Catalyzes the phosphorylation of pantothenate (Pan), the first step in CoA biosynthesis. This Bacteroides fragilis (strain ATCC 25285 / DSM 2151 / CCUG 4856 / JCM 11019 / LMG 10263 / NCTC 9343 / Onslow / VPI 2553 / EN-2) protein is Type III pantothenate kinase.